The sequence spans 101 residues: DET1- and DDB1-associated protein 1 (101 aa).

The segment at 67 to 101 (NAAKKRDQDQLEIGETSAPPRKIARTDSQEMSEDT) is disordered.

The protein belongs to the DDA1 family. As to quaternary structure, component of numerous DCX (DDB1-CUL4-X-box) E3 ubiquitin-protein ligase complexes which consist of a core of DDB1, cullin-4 (CUL4A or CUL4B), DDA1 and RBX1.

The protein operates within protein modification; protein ubiquitination. Its function is as follows. Functions as a component of numerous distinct DCX (DDB1-CUL4-X-box) E3 ubiquitin-protein ligase complexes which mediate the ubiquitination and subsequent proteasomal degradation of target proteins. In the DCX complexes, acts as a scaffolding subunit required to stabilize the complex. The sequence is that of DET1- and DDB1-associated protein 1 from Xenopus tropicalis (Western clawed frog).